A 178-amino-acid chain; its full sequence is ATP synthase subunit delta (178 aa).

The protein belongs to the ATPase delta chain family. F-type ATPases have 2 components, F(1) - the catalytic core - and F(0) - the membrane proton channel. F(1) has five subunits: alpha(3), beta(3), gamma(1), delta(1), epsilon(1). F(0) has three main subunits: a(1), b(2) and c(10-14). The alpha and beta chains form an alternating ring which encloses part of the gamma chain. F(1) is attached to F(0) by a central stalk formed by the gamma and epsilon chains, while a peripheral stalk is formed by the delta and b chains.

The protein resides in the cell inner membrane. In terms of biological role, f(1)F(0) ATP synthase produces ATP from ADP in the presence of a proton or sodium gradient. F-type ATPases consist of two structural domains, F(1) containing the extramembraneous catalytic core and F(0) containing the membrane proton channel, linked together by a central stalk and a peripheral stalk. During catalysis, ATP synthesis in the catalytic domain of F(1) is coupled via a rotary mechanism of the central stalk subunits to proton translocation. Functionally, this protein is part of the stalk that links CF(0) to CF(1). It either transmits conformational changes from CF(0) to CF(1) or is implicated in proton conduction. This chain is ATP synthase subunit delta, found in Dechloromonas aromatica (strain RCB).